Here is a 258-residue protein sequence, read N- to C-terminus: UPF0246 protein HI_0984 (258 aa).

It belongs to the UPF0246 family.

This is UPF0246 protein HI_0984 from Haemophilus influenzae (strain ATCC 51907 / DSM 11121 / KW20 / Rd).